The primary structure comprises 760 residues: Armadillo-like helical domain-containing protein 4 (760 aa).

The signal sequence occupies residues 1 to 27; the sequence is MSRPIVLHICLAFCSLLLLNFAAQCLA. At 28 to 700 the chain is on the extracellular side; that stretch reads FPNLERREIV…KDKAGYMSGM (673 aa). Disordered stretches follow at residues 49 to 69, 117 to 143, 216 to 243, 373 to 392, 474 to 495, and 536 to 652; these read LNTD…SGDP, GEEV…LTNP, RTEK…TEPS, HGGE…PMGD, TRGE…DAPR, and NEEL…SQEP. Asparagine 56 is a glycosylation site (N-linked (GlcNAc...) asparagine). A compositionally biased stretch (basic and acidic residues) spans 216-228; it reads RTEKFEANPEHKT. A compositionally biased stretch (polar residues) spans 380 to 390; the sequence is DQSSVTPTSPM. Residues 474-484 show a composition bias toward basic and acidic residues; the sequence is TRGEDETKGGR. Positions 594-635 are enriched in acidic residues; it reads LESEEGEDDEDEEDEEEEDEEEEDEEEDEEDKDADSLDEALG. The helical transmembrane segment at 701-721 threads the bilayer; that stretch reads LVPVGVGIAGALFILGALYSI. Topologically, residues 722–760 are cytoplasmic; it reads KVMNRRRRNGFKRHKRKQREFNSMQDRVMLLADSSEDEF. Serine 755 and serine 756 each carry phosphoserine.

As to quaternary structure, interacts with IL6ST; this interaction prevents IL6ST protein homodimerization and bridges ARMH4 with IL6R and STAT3 and therefore inhibits phosphorylation of STAT3 at 'Tyr-705'. Interacts (via cytoplasmic tail) with RICTOR; this interaction bridges ARMH4 to the mTORC2 complex and inhibits the mTORC2 kinase activity.

Its subcellular location is the membrane. May modulate immune response and may play a role in inflammation. Down-modulates STAT3 signaling throught direct interaction with IL6ST, resulting in the inhibition of phosphorylation of STAT3 at Tyr-705. May negatively regulates AKT signaling by modulating the activity of mTORC2 complex through RICTOR interaction. This chain is Armadillo-like helical domain-containing protein 4, found in Bos taurus (Bovine).